Reading from the N-terminus, the 893-residue chain is MRTADIAKRYLDYFAKHDHLIVPSASLISPNPTTLFTIAGMVPFIPYLMGEQTPPKRRMASNQKCVRTLDIDEVGKTTRHGTFFQMLGNFSFGDYFKEEAIHYAWELLTTSQDEGGYGFDPEKLWMTTFTDDDEARSMWINEGVDPEHIQKMGMEDNFWTTGGPGPGGPCSEIYVDRGPAFGKEGGPIADENRYIEIWDLVFENYEVDNVKSKTDLHIVGELENKNIDTGAGLERLAYLLQGKNNIYETDEVFPVIEAAEQLSGLKYGENEDADVRFRVVADHVRSALMIMSDGVRPSNVGRGYVLRRLLRRTVRSMRMLGVTDPVLPTLFPTSKAAMEASYPELNDTFHEVSESAYGEEDAFRRTLETGTTILDVAVNKAKSDSAEPVVAGEDAFKLHDTYGFPIELTLEMAAEQGVKVDEAKFRELMAEQKSRARADALKKRHNVDLSVYDDFKKTLVSPIDFLGYTDMSARAKVIGIMQEGKGSVPAVTGPANVEVILDRTPFYAEAGGQLADQGEILSDDGAVLEVDDVQKPIKDLIVHQCRLTEGTLVVGAEVNANIDLARRGAIARSHTATHMVHKALREELGPQATQRGSEDAPNRLRFDFQWSKAPAKSVISAVEERVNDKLRDNLAVTTKEMKFDDAIALGAMHLFGEKYGDIVRVVSIGEDGWSRELCGGTHVDHVGKIGMVNILSEASIGSGVRRVDAVVGQGAYDFNAREHALVSQLSDKLNARPDELAERVNALLAKLKESDRRLASMYESQLAASVPALVADTKNSAAPVKVAVKNVGHFGAVDALRKTVLDVRAQLGEDAPVVVALAGVNEDDKPMVAVATNEAARKAGIKAGDLVRGAAKVLGGGGGGKPDFAQGGGVDASKIDEALEALKHEAQKA.

Zn(2+) contacts are provided by H574, H578, C678, and H682.

The protein belongs to the class-II aminoacyl-tRNA synthetase family. Zn(2+) serves as cofactor.

The protein resides in the cytoplasm. It catalyses the reaction tRNA(Ala) + L-alanine + ATP = L-alanyl-tRNA(Ala) + AMP + diphosphate. In terms of biological role, catalyzes the attachment of alanine to tRNA(Ala) in a two-step reaction: alanine is first activated by ATP to form Ala-AMP and then transferred to the acceptor end of tRNA(Ala). Also edits incorrectly charged Ser-tRNA(Ala) and Gly-tRNA(Ala) via its editing domain. The sequence is that of Alanine--tRNA ligase from Bifidobacterium longum (strain NCC 2705).